A 348-amino-acid chain; its full sequence is Fe-S cluster assembly protein DRE2 (348 aa).

Positions 1-158 are N-terminal SAM-like domain; that stretch reads MSQYKTGLLL…LPTFKKASSS (158 aa). Residues 137–170 are disordered; that stretch reads KTNNTKLQSGSKLPTFKKASSSTSNLPSFKKADH. Positions 144-163 are enriched in polar residues; that stretch reads QSGSKLPTFKKASSSTSNLP. Positions 159 to 242 are linker; it reads TSNLPSFKKA…EEELIDEDGS (84 aa). A Phosphoserine modification is found at S206. [2Fe-2S] cluster contacts are provided by C252, C263, C266, and C268. The segment at 252 to 268 is fe-S binding site A; that stretch reads CGKSKTKKKKACKDCTC. [4Fe-4S] cluster-binding residues include C311, C314, C322, and C325. Short sequence motifs (cx2C motif) lie at residues 311–314 and 322–325; these read CGSC and CSGC. A fe-S binding site B region spans residues 311–325; it reads CGSCSLGDAFRCSGC.

This sequence belongs to the anamorsin family. As to quaternary structure, monomer. Interacts with TAH18. Interacts with MIA40. [2Fe-2S] cluster serves as cofactor. Requires [4Fe-4S] cluster as cofactor. In terms of processing, ubiquitinated.

The protein resides in the cytoplasm. The protein localises to the mitochondrion intermembrane space. Its function is as follows. Component of the cytosolic iron-sulfur (Fe-S) protein assembly (CIA) machinery required for the maturation of extramitochondrial Fe-S proteins. Part of an electron transfer chain functioning in an early step of cytosolic Fe-S biogenesis, facilitating the de novo assembly of a [4Fe-4S] cluster on the scaffold complex CFD1-NBP35. Electrons are transferred to DRE2 from NADPH via the FAD- and FMN-containing protein TAH18. TAH18-DRE2 are also required for the assembly of the diferric tyrosyl radical cofactor of ribonucleotide reductase (RNR), probably by providing electrons for reduction during radical cofactor maturation in the catalytic small subunit RNR2. Has anti-apoptotic effects in the cell. Involved in negative control of H(2)O(2)-induced cell death. The protein is Fe-S cluster assembly protein DRE2 of Saccharomyces cerevisiae (strain ATCC 204508 / S288c) (Baker's yeast).